The primary structure comprises 378 residues: Transaldolase 1 (378 aa).

Lys-146 functions as the Schiff-base intermediate with substrate in the catalytic mechanism.

Belongs to the transaldolase family. Type 2 subfamily.

It is found in the cytoplasm. It catalyses the reaction D-sedoheptulose 7-phosphate + D-glyceraldehyde 3-phosphate = D-erythrose 4-phosphate + beta-D-fructose 6-phosphate. It functions in the pathway carbohydrate degradation; pentose phosphate pathway; D-glyceraldehyde 3-phosphate and beta-D-fructose 6-phosphate from D-ribose 5-phosphate and D-xylulose 5-phosphate (non-oxidative stage): step 2/3. In terms of biological role, transaldolase is important for the balance of metabolites in the pentose-phosphate pathway. The chain is Transaldolase 1 from Streptomyces avermitilis (strain ATCC 31267 / DSM 46492 / JCM 5070 / NBRC 14893 / NCIMB 12804 / NRRL 8165 / MA-4680).